Here is a 258-residue protein sequence, read N- to C-terminus: Acetylglutamate kinase (258 aa).

Substrate contacts are provided by residues Gly-44–Gly-45, Arg-66, and Asn-158. ATP is bound by residues Asp-181–Leu-186 and Ile-209–Thr-211.

It belongs to the acetylglutamate kinase family. ArgB subfamily. Homodimer.

It is found in the cytoplasm. It catalyses the reaction N-acetyl-L-glutamate + ATP = N-acetyl-L-glutamyl 5-phosphate + ADP. It functions in the pathway amino-acid biosynthesis; L-arginine biosynthesis; N(2)-acetyl-L-ornithine from L-glutamate: step 2/4. In terms of biological role, catalyzes the ATP-dependent phosphorylation of N-acetyl-L-glutamate. This Salmonella paratyphi A (strain ATCC 9150 / SARB42) protein is Acetylglutamate kinase.